A 108-amino-acid polypeptide reads, in one-letter code: Protein translation factor SUI1 (108 aa).

The disordered stretch occupies residues methionine 1–alanine 20.

The protein belongs to the SUI1 family.

Its function is as follows. Additional factor that functions in concert with eIF-2 and the initiator tRNA in directing the ribosome to the proper start site of translation. The polypeptide is Protein translation factor SUI1 (SUI1A) (Eremothecium gossypii (strain ATCC 10895 / CBS 109.51 / FGSC 9923 / NRRL Y-1056) (Yeast)).